The following is a 1438-amino-acid chain: DNA polymerase III PolC-type (1438 aa).

The Exonuclease domain maps to Y422–F578.

This sequence belongs to the DNA polymerase type-C family. PolC subfamily.

The protein localises to the cytoplasm. It catalyses the reaction DNA(n) + a 2'-deoxyribonucleoside 5'-triphosphate = DNA(n+1) + diphosphate. Its function is as follows. Required for replicative DNA synthesis. This DNA polymerase also exhibits 3' to 5' exonuclease activity. This chain is DNA polymerase III PolC-type, found in Staphylococcus haemolyticus (strain JCSC1435).